Consider the following 408-residue polypeptide: Histidine--tRNA ligase (408 aa).

It belongs to the class-II aminoacyl-tRNA synthetase family. In terms of assembly, homodimer.

It localises to the cytoplasm. It carries out the reaction tRNA(His) + L-histidine + ATP = L-histidyl-tRNA(His) + AMP + diphosphate + H(+). This Campylobacter concisus (strain 13826) protein is Histidine--tRNA ligase.